Consider the following 338-residue polypeptide: Putative ankyrin repeat protein CBU_0781 (338 aa).

The interval 1-31 is disordered; sequence MSRRETPTSTISSTPTGTRTPRRRLSRKGHP. The segment covering 7–19 has biased composition (low complexity); it reads PTSTISSTPTGTR. Over residues 20–31 the composition is skewed to basic residues; that stretch reads TPRRRLSRKGHP. ANK repeat units follow at residues 92–124 and 125–157; these read QGDTLLIKAAKKGKFLIAKALLEAGAYKEIVNK and LGETALICAVRHFRVETLDLLIQYHADVKIKYK. A coiled-coil region spans residues 197-242; the sequence is SQIMASDKEIDEIIRNARNLQIIKKEKREAEERARTKKSKQITLQR. Positions 319 to 338 are disordered; it reads KKEDTTLSRNNSLSCLSSPR. Low complexity predominate over residues 325-338; sequence LSRNNSLSCLSSPR.

The polypeptide is Putative ankyrin repeat protein CBU_0781 (Coxiella burnetii (strain RSA 493 / Nine Mile phase I)).